The sequence spans 245 residues: 4-hydroxy-tetrahydrodipicolinate reductase (245 aa).

NAD(+) is bound by residues 7-12, D33, 75-77, and 102-105; these read GAKGKV, GTT, and APNF. H132 functions as the Proton donor/acceptor in the catalytic mechanism. H133 is a binding site for (S)-2,3,4,5-tetrahydrodipicolinate. The active-site Proton donor is K136. (S)-2,3,4,5-tetrahydrodipicolinate is bound at residue 142–143; it reads GT.

The protein belongs to the DapB family.

It is found in the cytoplasm. The catalysed reaction is (S)-2,3,4,5-tetrahydrodipicolinate + NAD(+) + H2O = (2S,4S)-4-hydroxy-2,3,4,5-tetrahydrodipicolinate + NADH + H(+). It carries out the reaction (S)-2,3,4,5-tetrahydrodipicolinate + NADP(+) + H2O = (2S,4S)-4-hydroxy-2,3,4,5-tetrahydrodipicolinate + NADPH + H(+). It participates in amino-acid biosynthesis; L-lysine biosynthesis via DAP pathway; (S)-tetrahydrodipicolinate from L-aspartate: step 4/4. Catalyzes the conversion of 4-hydroxy-tetrahydrodipicolinate (HTPA) to tetrahydrodipicolinate. This Mycolicibacterium paratuberculosis (strain ATCC BAA-968 / K-10) (Mycobacterium paratuberculosis) protein is 4-hydroxy-tetrahydrodipicolinate reductase.